Here is a 314-residue protein sequence, read N- to C-terminus: MMKDLDKLAVAIIGSGNIGTDLMIKVLRHAKHLDVAAMVGIDPASDGLARAARLGVPTTAGGIDGLVAMPGFADVRIAFDATSAGAHARHAEVLGRHGVQVIDLTPAAIGPFVVPVVNLFEHLDAPNLNMVTCGGQATIPIVHAVSRVAPVHYAEIVASISSRSAGPGTRANIDEFTETTSKAIETVGGAARGKAIIVLNPAEPPLMMRDTVYCLTDEDADTAAIEHSIRTMVDAVASYVPGYRLKQAVQFDRYTAAQPLAFDAGERRAGLKVSVFLEVEGAAHYLPSYAGNLDIMTSAALAAAEQIAASRVAA.

15–18 (SGNI) is an NAD(+) binding site. The active-site Acyl-thioester intermediate is C133. Residues 164–172 (SAGPGTRAN) and N292 contribute to the NAD(+) site.

This sequence belongs to the acetaldehyde dehydrogenase family.

It catalyses the reaction acetaldehyde + NAD(+) + CoA = acetyl-CoA + NADH + H(+). The chain is Acetaldehyde dehydrogenase 4 from Burkholderia lata (strain ATCC 17760 / DSM 23089 / LMG 22485 / NCIMB 9086 / R18194 / 383).